An 88-amino-acid polypeptide reads, in one-letter code: Bombyxin B-8 (88 aa).

An N-terminal signal peptide occupies residues 1–18 (MKTSVIFVLIVLNLMWSG). 3 disulfide bridges follow: Cys-28–Cys-74, Cys-40–Cys-87, and Cys-73–Cys-78. The propeptide at 47-65 (GGAQYAPYFWQKAYLGSRG) is c peptide like.

The protein belongs to the insulin family. Heterodimer of a B chain and an A chain linked by two disulfide bonds.

It localises to the secreted. In terms of biological role, brain peptide responsible for activation of prothoracic glands to produce ecdysone in insects. This Bombyx mori (Silk moth) protein is Bombyxin B-8 (BBXB8).